The primary structure comprises 898 residues: Cilium assembly protein DZIP1 (898 aa).

The interval D14–K66 is disordered. Low complexity predominate over residues P25–S46. Residues T47–S60 show a composition bias toward polar residues. Residues L145 to M197 adopt a coiled-coil conformation. The C2H2-type zinc-finger motif lies at H207–H230. 2 coiled-coil regions span residues N242–Q353 and S407–K447. Over residues T435–P463 the composition is skewed to polar residues. 3 disordered regions span residues T435 to K509, E585 to G739, and K773 to T878. The segment covering S495 to R505 has biased composition (low complexity). Positions Y573–E590 form a coiled coil. The segment covering V605 to L652 has biased composition (polar residues). The segment covering S662 to S684 has biased composition (acidic residues). 2 stretches are compositionally biased toward polar residues: residues P685 to R715 and A723 to S734. Residues K797–S815 are compositionally biased toward basic and acidic residues. Residues D816 to D826 show a composition bias toward acidic residues. Polar residues predominate over residues D855–G866.

Belongs to the DZIP C2H2-type zinc-finger protein family. As to expression, expressed throughout the embryo starting at 12 hours.

It localises to the cell projection. The protein localises to the cilium. Its subcellular location is the cytoplasm. The protein resides in the cytoskeleton. It is found in the cilium basal body. It localises to the microtubule organizing center. The protein localises to the centrosome. Its subcellular location is the centriole. The protein resides in the nucleus. Functionally, molecular adapter that recruits protein complexes required for cilium assembly and function to the cilium basal body. Required for establishment of left-right asymmetry during embryogenesis. Acts as a permissive factor that is required for the proper regulation of Hedgehog (Hh) target genes in response to Hh signals. Acts downstream of the Smoothened protein to modulate Gli activity in the somites of the developing embryo. The protein is Cilium assembly protein DZIP1 (dzip1) of Danio rerio (Zebrafish).